The following is a 432-amino-acid chain: Hexane cyclase pydB (432 aa).

Residues 1–20 (MMHQSLGLGLVVFVAAPVVA) form the signal peptide. Asn-59, Asn-78, Asn-153, and Asn-308 each carry an N-linked (GlcNAc...) asparagine glycan.

It belongs to the Diels-Alderase family.

It participates in mycotoxin biosynthesis. Functionally, hexane cyclase; part of the gene cluster that mediates the biosynthesis of pyrrocidines, fungal natural products containing a macrocyclic para-cyclophane connected to a decahydrofluorene ring system that show potent antibiotic activities toward Gram-negative bacteria. Within the pathway, pydB functions synergistically with pydE, pydX and pydZ to form the cyclophane. The pathway begins with the PKS-NRPS pydA which, with the help of the trans-enoyl reductase pydC, synthesizes the polyketide-tyrosyl acyl thioester product which can be reductively off-loaded by the terminal reductase (R) domain in pydA. The alpha/beta hydrolase pydG is then required to catalyze the subsequent Knoevenagel condensation that affords the 3-pyrrolin-2-one ring, whereas the four proteins pydB, pydE, pydX and pydZ then function synergistically to form the cyclophane. PydB and the membrane-bound pydX and pydZ are lipid-binding proteins that can sequester and mold the pdyG product into the inverse S-shape. Binding of the medium chain reductase pydE to the complex would trigger the cascade oxidative cyclization. PydY is involved the Diels-Alder cycloaddition that forms the decahydrofluorene core. Additional non-enzymatic hydroxylation yields pyrrocidine A2 which can be further reduced into pyrrocidine B by an endogenous reductase. This is Hexane cyclase pydB from Acremonium sp.